Here is a 147-residue protein sequence, read N- to C-terminus: Hemoglobin subunit epsilon (147 aa).

Residues 3 to 147 (HFTAEEKNAI…VANALAHKYH (145 aa)) form the Globin domain. Ser-51 is subject to Phosphoserine. Residues His-64 and His-93 each contribute to the heme b site.

The protein belongs to the globin family. As to quaternary structure, heterotetramer of two alpha chains and two epsilon chains in early embryonic hemoglobin Gower-2; two zeta chains and two epsilon chains in early embryonic hemoglobin Gower-1. In terms of tissue distribution, red blood cells.

In terms of biological role, the epsilon chain is a beta-type chain of early mammalian embryonic hemoglobin. This Sminthopsis crassicaudata (Fat-tailed dunnart) protein is Hemoglobin subunit epsilon (HBE1).